A 505-amino-acid chain; its full sequence is Deoxyguanosinetriphosphate triphosphohydrolase (505 aa).

The HD domain maps to 66 to 273; that stretch reads RLTHSMEVQQ…MEAADDISYC (208 aa).

This sequence belongs to the dGTPase family. Type 1 subfamily. Homotetramer. Mg(2+) is required as a cofactor.

The catalysed reaction is dGTP + H2O = 2'-deoxyguanosine + triphosphate + H(+). In terms of biological role, dGTPase preferentially hydrolyzes dGTP over the other canonical NTPs. The chain is Deoxyguanosinetriphosphate triphosphohydrolase from Salmonella arizonae (strain ATCC BAA-731 / CDC346-86 / RSK2980).